A 343-amino-acid polypeptide reads, in one-letter code: GTPase Obg (343 aa).

In terms of domain architecture, Obg spans 1–157 (MKFIDEVSIS…IEVRLELKLI (157 aa)). The tract at residues 13–44 (SGRGGPGCVSFRRESMQARGGPDGGNGGKGGD) is disordered. A compositionally biased stretch (gly residues) spans 33–43 (GPDGGNGGKGG). In terms of domain architecture, OBG-type G spans 158–338 (ADVGIVGFPN…FVQELARQIL (181 aa)). Residues 164-171 (GFPNAGKS), 189-193 (FTTLT), 211-214 (DIPG), 290-293 (NKID), and 319-321 (SAV) each bind GTP. The Mg(2+) site is built by Ser-171 and Thr-191.

The protein belongs to the TRAFAC class OBG-HflX-like GTPase superfamily. OBG GTPase family. As to quaternary structure, monomer. The cofactor is Mg(2+).

The protein localises to the cytoplasm. In terms of biological role, an essential GTPase which binds GTP, GDP and possibly (p)ppGpp with moderate affinity, with high nucleotide exchange rates and a fairly low GTP hydrolysis rate. Plays a role in control of the cell cycle, stress response, ribosome biogenesis and in those bacteria that undergo differentiation, in morphogenesis control. The polypeptide is GTPase Obg (Bdellovibrio bacteriovorus (strain ATCC 15356 / DSM 50701 / NCIMB 9529 / HD100)).